We begin with the raw amino-acid sequence, 232 residues long: MGQKVNPIGLRLGINRNWESRWFPTKASLPENIGEDYKIRAFLKKKLYYAGISQILIERTAKKLRVTVVAARPGIIIGKKGQDVENLKNDVSKLIGKEVNVNIKEERKAQASAQLAAENVAMQLEKRVAFRRAMKKVIQGAQKSGAKGIKISVAGRLGGAEMARTEWYLEGRVPLHTLRAKIDYGVAEAHTTYGNIGIKVWIFKGEVLQKGVQPEKTEDDAPKKTRRPRRGK.

The region spanning 39–107 (IRAFLKKKLY…EVNVNIKEER (69 aa)) is the KH type-2 domain. Residues 212-232 (VQPEKTEDDAPKKTRRPRRGK) are disordered. Basic and acidic residues predominate over residues 213-223 (QPEKTEDDAPK).

Belongs to the universal ribosomal protein uS3 family. In terms of assembly, part of the 30S ribosomal subunit. Forms a tight complex with proteins S10 and S14.

Functionally, binds the lower part of the 30S subunit head. Binds mRNA in the 70S ribosome, positioning it for translation. In Campylobacter curvus (strain 525.92), this protein is Small ribosomal subunit protein uS3.